The following is a 310-amino-acid chain: Formimidoylglutamase (310 aa).

Mn(2+)-binding residues include His-120, Asp-148, His-150, Asp-152, Asp-233, and Asp-235.

Belongs to the arginase family. Mn(2+) is required as a cofactor.

It catalyses the reaction N-formimidoyl-L-glutamate + H2O = formamide + L-glutamate. It participates in amino-acid degradation; L-histidine degradation into L-glutamate; L-glutamate from N-formimidoyl-L-glutamate (hydrolase route): step 1/1. Catalyzes the conversion of N-formimidoyl-L-glutamate to L-glutamate and formamide. The sequence is that of Formimidoylglutamase from Nocardia farcinica (strain IFM 10152).